Reading from the N-terminus, the 702-residue chain is Ribosomal RNA large subunit methyltransferase K/L (702 aa).

Residues 43 to 154 (LVYQSLMWSR…KETASIALDL (112 aa)) form the THUMP domain.

It belongs to the methyltransferase superfamily. RlmKL family.

The protein localises to the cytoplasm. It carries out the reaction guanosine(2445) in 23S rRNA + S-adenosyl-L-methionine = N(2)-methylguanosine(2445) in 23S rRNA + S-adenosyl-L-homocysteine + H(+). It catalyses the reaction guanosine(2069) in 23S rRNA + S-adenosyl-L-methionine = N(2)-methylguanosine(2069) in 23S rRNA + S-adenosyl-L-homocysteine + H(+). Its function is as follows. Specifically methylates the guanine in position 2445 (m2G2445) and the guanine in position 2069 (m7G2069) of 23S rRNA. This Escherichia coli (strain SMS-3-5 / SECEC) protein is Ribosomal RNA large subunit methyltransferase K/L.